Here is a 294-residue protein sequence, read N- to C-terminus: Large ribosomal subunit protein uL18 (294 aa).

The interval 247–275 (RADPSPSAKKAAKPSKRHTAKRLTYDERK) is disordered. The segment covering 256 to 267 (KAAKPSKRHTAK) has biased composition (basic residues).

This sequence belongs to the universal ribosomal protein uL18 family. As to quaternary structure, component of the large ribosomal subunit (LSU).

It localises to the cytoplasm. The protein resides in the nucleus. In terms of biological role, component of the ribosome, a large ribonucleoprotein complex responsible for the synthesis of proteins in the cell. The small ribosomal subunit (SSU) binds messenger RNAs (mRNAs) and translates the encoded message by selecting cognate aminoacyl-transfer RNA (tRNA) molecules. The large subunit (LSU) contains the ribosomal catalytic site termed the peptidyl transferase center (PTC), which catalyzes the formation of peptide bonds, thereby polymerizing the amino acids delivered by tRNAs into a polypeptide chain. The nascent polypeptides leave the ribosome through a tunnel in the LSU and interact with protein factors that function in enzymatic processing, targeting, and the membrane insertion of nascent chains at the exit of the ribosomal tunnel. The protein is Large ribosomal subunit protein uL18 (rpl-5) of Caenorhabditis briggsae.